The sequence spans 756 residues: Transient receptor potential cation channel subfamily V member 2 (756 aa).

The segment at 1–45 (MTSASNPPAFRLETSDGDEEGSAEVNKGKNEPPPMESPFQGEDRN) is disordered. A required for interaction with SLC50A1 region spans residues 1–385 (MTSASNPPAF…LLQEKWDRLI (385 aa)). Residues 1–387 (MTSASNPPAF…QEKWDRLIPR (387 aa)) are Cytoplasmic-facing. Ser-15 and Ser-77 each carry phosphoserine. ANK repeat units follow at residues 68–110 (NRFD…TEGS), 111–157 (TGKT…DEFY), 158–203 (RGHS…TCFY), 204–239 (FGEL…ATDS), 240–288 (LGNT…ICNH), and 289–315 (QGLT…REFS). The helical transmembrane segment at 388–408 (FFFNFACYLVYMIIFTIVAYH) threads the bilayer. At 409–428 (QPSLEQPAIPSSKATFGDSM) the chain is on the extracellular side. A helical membrane pass occupies residues 429–449 (LLLGHILILLGGIYLLLGQLW). Topologically, residues 450 to 455 (YFWRRR) are cytoplasmic. A helical membrane pass occupies residues 456-476 (LFIWISFMDSYFEILFLVQAL). The Extracellular segment spans residues 477–490 (LTVLSQVLRFVETE). A helical membrane pass occupies residues 491-511 (WYLPLLVSSLVLGWLNLLYYT). Topologically, residues 512–532 (RGFQHTGIYSVMIQKVILRDL) are cytoplasmic. The helical transmembrane segment at 533–553 (LRFLLVYLVFLFGFAVALVSL) threads the bilayer. The interval 559–583 (SPKAPEDSNTTVTEKPTLGQEEEPV) is disordered. An N-linked (GlcNAc...) asparagine glycan is attached at Asn-567. The pore-forming intramembrane region spans 568-604 (TTVTEKPTLGQEEEPVPYGGILDASLELFKFTIGMGE). Residues 617–637 (VLLLLLAYVLLTYVLLLNMLI) form a helical membrane-spanning segment. The Cytoplasmic portion of the chain corresponds to 638–756 (ALMSETVNSV…HLPLQVLQSH (119 aa)). The interval 719–756 (EDPSGAGITGYKKNPTSKPGKNSASEEDHLPLQVLQSH) is disordered. The segment covering 732 to 741 (NPTSKPGKNS) has biased composition (polar residues). 2 positions are modified to phosphoserine: Ser-743 and Ser-755.

Belongs to the transient receptor (TC 1.A.4) family. TrpV subfamily. TRPV2 sub-subfamily. Homotetramer. Interacts with a cAMP-dependent protein kinase type II regulatory subunit (PRKAR2A or PRKAR2B) and ACBD3. Interacts with SLC50A1; the interaction probably occurs intracellularly and depends on TRPV2 N-glycosylation. N-glycosylated. Post-translationally, phosphorylated by PKA. Abundantly expressed in spleen, placenta, skeleton muscle, lung and brain.

The protein localises to the cell membrane. The protein resides in the cytoplasm. It is found in the melanosome. The enzyme catalyses Ca(2+)(in) = Ca(2+)(out). It catalyses the reaction Mg(2+)(in) = Mg(2+)(out). The catalysed reaction is Na(+)(in) = Na(+)(out). It carries out the reaction K(+)(in) = K(+)(out). Its function is as follows. Calcium-permeable, non-selective cation channel with an outward rectification. Seems to be regulated, at least in part, by IGF1, PDGF and neuropeptide head activator. May transduce physical stimuli in mast cells. Activated by temperatures higher than 52 degrees Celsius; is not activated by vanilloids and acidic pH. The sequence is that of Transient receptor potential cation channel subfamily V member 2 (Trpv2) from Mus musculus (Mouse).